The primary structure comprises 473 residues: Photosystem II CP43 reaction center protein (473 aa).

Residues 1 to 14 (MKTLYSLRRFYHVE) constitute a propeptide that is removed on maturation. At Thr-15 the chain carries N-acetylthreonine. Thr-15 carries the post-translational modification Phosphothreonine. 5 helical membrane passes run 69–93 (LFEV…PHLA), 134–155 (LLGP…KDRN), 178–200 (KALY…RKIA), 255–275 (KPFA…LSYS), and 291–312 (WFNN…ASQA). [CaMn4O5] cluster is bound at residue Glu-367. The helical transmembrane segment at 447–471 (RARAAAAGFEKGIDRDFEPVLSMTP) threads the bilayer.

The protein belongs to the PsbB/PsbC family. PsbC subfamily. In terms of assembly, PSII is composed of 1 copy each of membrane proteins PsbA, PsbB, PsbC, PsbD, PsbE, PsbF, PsbH, PsbI, PsbJ, PsbK, PsbL, PsbM, PsbT, PsbX, PsbY, PsbZ, Psb30/Ycf12, at least 3 peripheral proteins of the oxygen-evolving complex and a large number of cofactors. It forms dimeric complexes. Requires Binds multiple chlorophylls and provides some of the ligands for the Ca-4Mn-5O cluster of the oxygen-evolving complex. It may also provide a ligand for a Cl- that is required for oxygen evolution. PSII binds additional chlorophylls, carotenoids and specific lipids. as cofactor.

Its subcellular location is the plastid membrane. One of the components of the core complex of photosystem II (PSII). It binds chlorophyll and helps catalyze the primary light-induced photochemical processes of PSII. PSII is a light-driven water:plastoquinone oxidoreductase, using light energy to abstract electrons from H(2)O, generating O(2) and a proton gradient subsequently used for ATP formation. This is Photosystem II CP43 reaction center protein from Cuscuta exaltata (Tall dodder).